Reading from the N-terminus, the 192-residue chain is Ribosome maturation factor RimM (192 aa).

The 75-residue stretch at 115–189 (EGEYYLSDLI…RIEITPPKGL (75 aa)) folds into the PRC barrel domain.

The protein belongs to the RimM family. In terms of assembly, binds ribosomal protein uS19.

The protein localises to the cytoplasm. An accessory protein needed during the final step in the assembly of 30S ribosomal subunit, possibly for assembly of the head region. Essential for efficient processing of 16S rRNA. May be needed both before and after RbfA during the maturation of 16S rRNA. It has affinity for free ribosomal 30S subunits but not for 70S ribosomes. The sequence is that of Ribosome maturation factor RimM from Acaryochloris marina (strain MBIC 11017).